Consider the following 401-residue polypeptide: Restriction of telomere capping protein 4 (401 aa).

S23 carries the phosphoserine modification. Basic and acidic residues predominate over residues 35-48 (KHDIHDRESDDLSG). The interval 35–59 (KHDIHDRESDDLSGHDAFSPSKKRG) is disordered.

Belongs to the RTC4 family.

It localises to the cytoplasm. Its subcellular location is the nucleus. Functionally, may be involved in a process influencing telomere capping. The polypeptide is Restriction of telomere capping protein 4 (RTC4) (Saccharomyces cerevisiae (strain ATCC 204508 / S288c) (Baker's yeast)).